Consider the following 178-residue polypeptide: ATP synthase subunit delta (178 aa).

The protein belongs to the ATPase delta chain family. F-type ATPases have 2 components, F(1) - the catalytic core - and F(0) - the membrane proton channel. F(1) has five subunits: alpha(3), beta(3), gamma(1), delta(1), epsilon(1). F(0) has three main subunits: a(1), b(2) and c(10-14). The alpha and beta chains form an alternating ring which encloses part of the gamma chain. F(1) is attached to F(0) by a central stalk formed by the gamma and epsilon chains, while a peripheral stalk is formed by the delta and b chains.

It localises to the cell inner membrane. In terms of biological role, f(1)F(0) ATP synthase produces ATP from ADP in the presence of a proton or sodium gradient. F-type ATPases consist of two structural domains, F(1) containing the extramembraneous catalytic core and F(0) containing the membrane proton channel, linked together by a central stalk and a peripheral stalk. During catalysis, ATP synthesis in the catalytic domain of F(1) is coupled via a rotary mechanism of the central stalk subunits to proton translocation. Its function is as follows. This protein is part of the stalk that links CF(0) to CF(1). It either transmits conformational changes from CF(0) to CF(1) or is implicated in proton conduction. This chain is ATP synthase subunit delta, found in Acinetobacter baylyi (strain ATCC 33305 / BD413 / ADP1).